The primary structure comprises 278 residues: Putative B3 domain-containing protein At2g21920 (278 aa).

A DNA-binding region (TF-B3) is located at residues 168 to 275; it reads ISKTLSRTDV…KFIILNFEYN (108 aa).

Its subcellular location is the nucleus. The sequence is that of Putative B3 domain-containing protein At2g21920 from Arabidopsis thaliana (Mouse-ear cress).